Reading from the N-terminus, the 545-residue chain is Glucose-6-phosphate isomerase (545 aa).

Catalysis depends on Glu-351, which acts as the Proton donor. Active-site residues include His-382 and Lys-510.

This sequence belongs to the GPI family.

It is found in the cytoplasm. The enzyme catalyses alpha-D-glucose 6-phosphate = beta-D-fructose 6-phosphate. It participates in carbohydrate biosynthesis; gluconeogenesis. It functions in the pathway carbohydrate degradation; glycolysis; D-glyceraldehyde 3-phosphate and glycerone phosphate from D-glucose: step 2/4. Catalyzes the reversible isomerization of glucose-6-phosphate to fructose-6-phosphate. This is Glucose-6-phosphate isomerase from Helicobacter pylori (strain HPAG1).